The primary structure comprises 219 residues: Protein DMP5 (219 aa).

The segment at 1–24 is disordered; it reads MSALRLRNANTPAPELDELSDQTP. Helical transmembrane passes span 51-71, 82-102, 142-162, and 182-202; these read LSNL…PVFT, FLTA…SFTD, MRFV…AVAL, and VLDI…MVFP.

Belongs to the plant DMP1 protein family.

It localises to the endoplasmic reticulum membrane. Involved in membrane remodeling. The sequence is that of Protein DMP5 from Arabidopsis thaliana (Mouse-ear cress).